Reading from the N-terminus, the 265-residue chain is Phosphate import ATP-binding protein PstB (265 aa).

An ABC transporter domain is found at 18-260; the sequence is MECRDCHVYY…PEDPRTESYI (243 aa). 50 to 57 contributes to the ATP binding site; that stretch reads GPSGCGKS.

This sequence belongs to the ABC transporter superfamily. Phosphate importer (TC 3.A.1.7) family. The complex is composed of two ATP-binding proteins (PstB), two transmembrane proteins (PstC and PstA) and a solute-binding protein (PstS).

It is found in the cell inner membrane. The enzyme catalyses phosphate(out) + ATP + H2O = ADP + 2 phosphate(in) + H(+). In terms of biological role, part of the ABC transporter complex PstSACB involved in phosphate import. Responsible for energy coupling to the transport system. This chain is Phosphate import ATP-binding protein PstB, found in Ruegeria pomeroyi (strain ATCC 700808 / DSM 15171 / DSS-3) (Silicibacter pomeroyi).